Reading from the N-terminus, the 308-residue chain is GTPase Era (308 aa).

The region spanning 9–179 (RAGFVALIGE…RAWLGASLPE (171 aa)) is the Era-type G domain. Positions 17 to 24 (GEPNAGKS) are G1. Position 17–24 (17–24 (GEPNAGKS)) interacts with GTP. The tract at residues 43 to 47 (QTTRA) is G2. Residues 64-67 (DTPG) form a G3 region. GTP is bound by residues 64–68 (DTPGL) and 129–132 (NKID). The tract at residues 129–132 (NKID) is G4. Positions 158–160 (ISA) are G5. A KH type-2 domain is found at 210 to 287 (LHQELPYQLT…HLFLQVKVRP (78 aa)).

The protein belongs to the TRAFAC class TrmE-Era-EngA-EngB-Septin-like GTPase superfamily. Era GTPase family. In terms of assembly, monomer.

The protein localises to the cytoplasm. It is found in the cell inner membrane. Its function is as follows. An essential GTPase that binds both GDP and GTP, with rapid nucleotide exchange. Plays a role in 16S rRNA processing and 30S ribosomal subunit biogenesis and possibly also in cell cycle regulation and energy metabolism. The chain is GTPase Era from Dinoroseobacter shibae (strain DSM 16493 / NCIMB 14021 / DFL 12).